The following is a 575-amino-acid chain: Probable cytochrome P450 514A1 (575 aa).

Residues 4-24 (IFTIILTITILVLSLILKDLL) form a helical membrane-spanning segment. Cysteine 448 provides a ligand contact to heme.

This sequence belongs to the cytochrome P450 family. Requires heme as cofactor.

It localises to the membrane. This Dictyostelium discoideum (Social amoeba) protein is Probable cytochrome P450 514A1 (cyp514A1).